Consider the following 548-residue polypeptide: T-complex protein 1 subunit theta (548 aa).

The segment at 528 to 548 (ATGGPKPRGPKQQDEDDDGMA) is disordered.

It belongs to the TCP-1 chaperonin family. In terms of assembly, heterooligomeric complex.

Its subcellular location is the cytoplasm. In terms of biological role, molecular chaperone; assists the folding of proteins upon ATP hydrolysis. Known to play a role, in vitro, in the folding of actin and tubulin. Required for correct subcellular localization of pgl-1. This chain is T-complex protein 1 subunit theta, found in Caenorhabditis briggsae.